Consider the following 352-residue polypeptide: Guanine nucleotide-binding protein alpha-7 subunit (352 aa).

Glycine 2 carries N-myristoyl glycine lipidation. Residue cysteine 4 is the site of S-palmitoyl cysteine attachment. Residues 32 to 352 (RIIKLLLLGA…AKNLKSMGLC (321 aa)) form the G-alpha domain. The tract at residues 35–48 (KLLLLGAGESGKST) is G1 motif. GTP-binding positions include 40 to 47 (GAGESGKS), 174 to 180 (LRTRIKT), 199 to 203 (DVGGQ), 268 to 271 (NKKD), and alanine 324. Residues serine 47 and threonine 180 each contribute to the Mg(2+) site. The interval 172–180 (DLLRTRIKT) is G2 motif. Positions 195 to 204 (FRVIDVGGQR) are G3 motif. Positions 264–271 (ILFLNKKD) are G4 motif. The G5 motif stretch occupies residues 322–327 (TCATDT).

The protein belongs to the G-alpha family. G(i/o/t/z) subfamily. G proteins are composed of 3 units; alpha, beta and gamma. The alpha chain contains the guanine nucleotide binding site.

In terms of biological role, guanine nucleotide-binding proteins (G proteins) are involved as modulators or transducers in various transmembrane signaling systems. In Caenorhabditis elegans, this protein is Guanine nucleotide-binding protein alpha-7 subunit (gpa-7).